A 91-amino-acid polypeptide reads, in one-letter code: Anther-specific protein RTS (91 aa).

Residues 1 to 21 form the signal peptide; that stretch reads MVRVGAAAAVLVLAAAAAAMA.

In terms of biological role, required for tapetum and pollen development. The sequence is that of Anther-specific protein RTS from Oryza sativa subsp. japonica (Rice).